The primary structure comprises 323 residues: UPF0200/UPF0201 protein AF_1395 (323 aa).

The UPF0200 stretch occupies residues 1 to 185; that stretch reads MVLEMKVIAF…EKIRQILLKL (185 aa). Residue 12–19 coordinates ATP; it reads GYPLSGKS. A UPF0201 region spans residues 186 to 323; it reads AKNVEIEIRT…GRPVKEIDKL (138 aa).

In the N-terminal section; belongs to the UPF0200 family. The protein in the C-terminal section; belongs to the UPF0201 family.

The chain is UPF0200/UPF0201 protein AF_1395 from Archaeoglobus fulgidus (strain ATCC 49558 / DSM 4304 / JCM 9628 / NBRC 100126 / VC-16).